The primary structure comprises 152 residues: Snaclec anticoagulant protein subunit A (152 aa).

An N-terminal signal peptide occupies residues 1-23 (MGRFIFVSFGLLVVYLSLSGTAA). One can recognise a C-type lectin domain in the interval 24-152 (DCSSSWSSYE…EQRDPFVCEA (129 aa)). 3 disulfides stabilise this stretch: cysteine 25/cysteine 36, cysteine 53/cysteine 150, and cysteine 125/cysteine 142. The Ca(2+) site is built by serine 64, glutamate 66, and glutamate 70. Position 151 (glutamate 151) interacts with Ca(2+).

Belongs to the snaclec family. Heterodimer of subunits A and B; disulfide-linked. In terms of tissue distribution, expressed by the venom gland.

The protein localises to the secreted. In terms of biological role, anticoagulant protein which binds to the gamma-carboxyglutamic acid-domain regions of factors IX and factor X in the presence of calcium with a 1 to 1 stoichiometry. Also inhibits platelet aggregation by binding to platelet glycoprotein Ibalpha (GP1BA) and functioning as a blocker of vWF. Is devoid of hemorrhagic and lethal activities. Possesses antithrombotic and thrombolytic activities. Also hydrolyzes the Aalpha-chain of fibrinogen. Does not affect the Bbeta-chain and the gamma chain. The protein is Snaclec anticoagulant protein subunit A of Deinagkistrodon acutus (Hundred-pace snake).